The sequence spans 584 residues: Proline--tRNA ligase (584 aa).

It belongs to the class-II aminoacyl-tRNA synthetase family. ProS type 1 subfamily. As to quaternary structure, homodimer.

The protein localises to the cytoplasm. The catalysed reaction is tRNA(Pro) + L-proline + ATP = L-prolyl-tRNA(Pro) + AMP + diphosphate. Its function is as follows. Catalyzes the attachment of proline to tRNA(Pro) in a two-step reaction: proline is first activated by ATP to form Pro-AMP and then transferred to the acceptor end of tRNA(Pro). As ProRS can inadvertently accommodate and process non-cognate amino acids such as alanine and cysteine, to avoid such errors it has two additional distinct editing activities against alanine. One activity is designated as 'pretransfer' editing and involves the tRNA(Pro)-independent hydrolysis of activated Ala-AMP. The other activity is designated 'posttransfer' editing and involves deacylation of mischarged Ala-tRNA(Pro). The misacylated Cys-tRNA(Pro) is not edited by ProRS. This Mycobacterium sp. (strain KMS) protein is Proline--tRNA ligase.